A 725-amino-acid chain; its full sequence is IML2-like protein YKR018C (725 aa).

Thr196 is modified (phosphothreonine). 3 positions are modified to phosphoserine: Ser246, Ser377, and Ser380.

This sequence belongs to the IML2 family.

The protein localises to the cytoplasm. The protein resides in the nucleus. This chain is IML2-like protein YKR018C, found in Saccharomyces cerevisiae (strain ATCC 204508 / S288c) (Baker's yeast).